We begin with the raw amino-acid sequence, 28 residues long: Conotoxin de7b (28 aa).

3 disulfide bridges follow: cysteine 2–cysteine 18, cysteine 9–cysteine 22, and cysteine 17–cysteine 27. Proline 4 carries the 4-hydroxyproline; partial modification. Glutamate 7 carries the 4-carboxyglutamate; partial modification. A 4-hydroxyproline; partial modification is found at proline 14.

In terms of tissue distribution, expressed by the venom duct.

Its subcellular location is the secreted. Its function is as follows. May inhibit sodium (Nav) or calcium channels (Cav). This chain is Conotoxin de7b, found in Conasprella delessertii (Sozon's cone).